The chain runs to 357 residues: Actin, cytoplasmic (357 aa).

The protein belongs to the actin family. Met-1 may be removed after translation.

The protein localises to the cytoplasm. Its subcellular location is the cytoskeleton. The catalysed reaction is ATP + H2O = ADP + phosphate + H(+). Actins are highly conserved proteins that are involved in various types of cell motility and are ubiquitously expressed in all eukaryotic cells. The sequence is that of Actin, cytoplasmic from Oxytricha fallax.